Here is a 414-residue protein sequence, read N- to C-terminus: Histidine--tRNA ligase (414 aa).

Belongs to the class-II aminoacyl-tRNA synthetase family. In terms of assembly, homodimer.

The protein resides in the cytoplasm. It carries out the reaction tRNA(His) + L-histidine + ATP = L-histidyl-tRNA(His) + AMP + diphosphate + H(+). The protein is Histidine--tRNA ligase of Pelobacter propionicus (strain DSM 2379 / NBRC 103807 / OttBd1).